Consider the following 305-residue polypeptide: Phosphatidate cytidylyltransferase (305 aa).

7 helical membrane passes run 24 to 44 (LLVF…AFIV), 97 to 117 (PEHV…HLVF), 124 to 144 (LGPI…SVPI), 151 to 171 (LYGF…IFLI), 202 to 222 (TVVG…IFYS), 232 to 252 (IAMP…GFFG), and 277 to 297 (MLDV…ILLI).

The protein belongs to the CDS family.

The protein resides in the cell membrane. The catalysed reaction is a 1,2-diacyl-sn-glycero-3-phosphate + CTP + H(+) = a CDP-1,2-diacyl-sn-glycerol + diphosphate. Its pathway is phospholipid metabolism; CDP-diacylglycerol biosynthesis; CDP-diacylglycerol from sn-glycerol 3-phosphate: step 3/3. The protein is Phosphatidate cytidylyltransferase (cdsA) of Chlamydia muridarum (strain MoPn / Nigg).